Consider the following 300-residue polypeptide: GTPase Era (300 aa).

Residues 8–176 enclose the Era-type G domain; sequence RCGYVAIVGR…EGLIAKHLPE (169 aa). A G1 region spans residues 16-23; the sequence is GRPNVGKS. A GTP-binding site is contributed by 16 to 23; that stretch reads GRPNVGKS. The tract at residues 42-46 is G2; it reads QTTRH. Positions 63 to 66 are G3; that stretch reads DTPG. Residues 63 to 67 and 125 to 128 each bind GTP; these read DTPGM and NKTD. Positions 125–128 are G4; the sequence is NKTD. The G5 stretch occupies residues 155-157; that stretch reads VSA. The KH type-2 domain occupies 199–283; that stretch reads VREKIMRQLG…MLNLWVKVKG (85 aa).

The protein belongs to the TRAFAC class TrmE-Era-EngA-EngB-Septin-like GTPase superfamily. Era GTPase family. In terms of assembly, monomer.

It localises to the cytoplasm. Its subcellular location is the cell inner membrane. An essential GTPase that binds both GDP and GTP, with rapid nucleotide exchange. Plays a role in 16S rRNA processing and 30S ribosomal subunit biogenesis and possibly also in cell cycle regulation and energy metabolism. The polypeptide is GTPase Era (Pseudomonas fluorescens (strain ATCC BAA-477 / NRRL B-23932 / Pf-5)).